A 117-amino-acid chain; its full sequence is cAMP-regulated phosphoprotein 19-B (117 aa).

A compositionally biased stretch (basic and acidic residues) spans 1–37; the sequence is MSRDNQEIKAPEESSAEEQKEMDDKVTSPEKAEEIKL. Residues 1-54 form a disordered region; it reads MSRDNQEIKAPEESSAEEQKEMDDKVTSPEKAEEIKLKSRYPNIGPKPGGSDFL. S28 carries the phosphoserine; by CDK2 modification. Residue S67 is modified to Phosphoserine; by GWL. The segment at 77-117 is disordered; it reads MKNKQLPTAAPDKTEVTGDHIPTPQDLPQRKPSLVASKLAG. A Phosphothreonine; by CDK2 modification is found at T99. S109 carries the post-translational modification Phosphoserine; by PKA.

This sequence belongs to the endosulfine family. In terms of assembly, interacts (when phosphorylated at Ser-67) with ppp2r2d. Phosphorylation at Ser-67 by gwl during mitosis is essential for interaction with ppp2r2d (PR55-delta) and subsequent inactivation of PP2A.

It is found in the cytoplasm. Protein phosphatase inhibitor that specifically inhibits protein phosphatase 2A (PP2A) during mitosis. When phosphorylated at Ser-67 during mitosis, specifically interacts with ppp2r2d (PR55-delta) and inhibits its activity, leading to inactivation of PP2A, an essential condition to keep cyclin-B1-CDK1 activity high during M phase. This Xenopus laevis (African clawed frog) protein is cAMP-regulated phosphoprotein 19-B (arpp19-b).